A 129-amino-acid polypeptide reads, in one-letter code: Holo-[acyl-carrier-protein] synthase (129 aa).

The Mg(2+) site is built by aspartate 8 and glutamate 60.

It belongs to the P-Pant transferase superfamily. AcpS family. Requires Mg(2+) as cofactor.

It localises to the cytoplasm. The catalysed reaction is apo-[ACP] + CoA = holo-[ACP] + adenosine 3',5'-bisphosphate + H(+). In terms of biological role, transfers the 4'-phosphopantetheine moiety from coenzyme A to a Ser of acyl-carrier-protein. The sequence is that of Holo-[acyl-carrier-protein] synthase from Anaeromyxobacter sp. (strain Fw109-5).